Here is a 256-residue protein sequence, read N- to C-terminus: Small ribosomal subunit protein uS2 (256 aa).

This sequence belongs to the universal ribosomal protein uS2 family.

The polypeptide is Small ribosomal subunit protein uS2 (Brucella abortus (strain S19)).